The chain runs to 444 residues: Putative GTP cyclohydrolase URC1 (444 aa).

Position 268–272 (268–272 (RVHDE)) interacts with GTP. Zn(2+)-binding residues include Cys-273, Cys-284, and Cys-286. 315–317 (EGR) lines the GTP pocket. Residue Asp-353 is the Proton acceptor of the active site. Residue Arg-355 is the Nucleophile of the active site. Residues Ser-377 and Lys-382 each coordinate GTP.

It belongs to the GTP cyclohydrolase II family.

The protein localises to the cytoplasm. The protein resides in the nucleus. In terms of biological role, involved in uracil catabolism. In Lachancea kluyveri (Yeast), this protein is Putative GTP cyclohydrolase URC1 (URC1).